The chain runs to 228 residues: Lipoprotein-releasing system ATP-binding protein LolD (228 aa).

The ABC transporter domain occupies 6-228; that stretch reads LRLSGIEKTY…LSDGRLSAES (223 aa). ATP is bound at residue 43–50; the sequence is APSGAGKS.

It belongs to the ABC transporter superfamily. Lipoprotein translocase (TC 3.A.1.125) family. As to quaternary structure, the complex is composed of two ATP-binding proteins (LolD) and two transmembrane proteins (LolC and LolE).

Its subcellular location is the cell inner membrane. Its function is as follows. Part of the ABC transporter complex LolCDE involved in the translocation of mature outer membrane-directed lipoproteins, from the inner membrane to the periplasmic chaperone, LolA. Responsible for the formation of the LolA-lipoprotein complex in an ATP-dependent manner. This Ruegeria pomeroyi (strain ATCC 700808 / DSM 15171 / DSS-3) (Silicibacter pomeroyi) protein is Lipoprotein-releasing system ATP-binding protein LolD.